We begin with the raw amino-acid sequence, 193 residues long: BH3-interacting domain death agonist (193 aa).

Positions 87-101 (IAAQLAEIGDQLDKQ) match the BH3 motif.

Forms heterodimers either with the pro-apoptotic protein BAX or the anti-apoptotic protein Bcl-2.

Its subcellular location is the cytoplasm. It localises to the mitochondrion outer membrane. Its function is as follows. Induces caspases and apoptosis. Counters the protective effect of Bcl-2. This Gallus gallus (Chicken) protein is BH3-interacting domain death agonist (BID).